The following is a 174-amino-acid chain: uncharacterized protein (174 aa).

This is an uncharacterized protein from Archaeoglobus fulgidus (strain ATCC 49558 / DSM 4304 / JCM 9628 / NBRC 100126 / VC-16).